Here is a 668-residue protein sequence, read N- to C-terminus: Probable potassium transport system protein Kup (668 aa).

12 helical membrane passes run 17 to 37 (GILV…LYVM), 59 to 79 (VSLI…VIAL), 104 to 124 (IIPA…TPAV), 148 to 168 (TIIV…QRFG), 175 to 195 (AFGP…LMNF), 221 to 241 (LGLF…ALYS), 256 to 276 (PYIK…LLTV), 299 to 319 (ILVF…QALI), 350 to 370 (MYIP…VLAF), 380 to 400 (YGLS…FYLL), 403 to 423 (IPAW…VVFF), and 430 to 450 (FFHG…IMII).

This sequence belongs to the HAK/KUP transporter (TC 2.A.72) family.

It is found in the cell membrane. The enzyme catalyses K(+)(in) + H(+)(in) = K(+)(out) + H(+)(out). Its function is as follows. Transport of potassium into the cell. Likely operates as a K(+):H(+) symporter. In Enterococcus faecalis (strain ATCC 700802 / V583), this protein is Probable potassium transport system protein Kup.